The primary structure comprises 214 residues: Adenylate kinase (214 aa).

ATP is bound at residue 10–15 (GAGKGT). The tract at residues 30 to 59 (STGDMLRAAVKAQTPVGLKAKAVMDRGELV) is NMP. Residues threonine 31, arginine 36, 57-59 (ELV), 85-88 (GYPR), and glutamine 92 contribute to the AMP site. The interval 126 to 163 (GRFTCAKCGTGYHDRHKQPAREGVCDVCGSTEFKRRPD) is LID. Arginine 127 provides a ligand contact to ATP. Residues cysteine 130, cysteine 133, cysteine 150, and cysteine 153 each coordinate Zn(2+). Positions 160 and 172 each coordinate AMP. Glycine 200 is a binding site for ATP.

Belongs to the adenylate kinase family. As to quaternary structure, monomer.

Its subcellular location is the cytoplasm. It catalyses the reaction AMP + ATP = 2 ADP. It functions in the pathway purine metabolism; AMP biosynthesis via salvage pathway; AMP from ADP: step 1/1. Functionally, catalyzes the reversible transfer of the terminal phosphate group between ATP and AMP. Plays an important role in cellular energy homeostasis and in adenine nucleotide metabolism. This is Adenylate kinase from Erythrobacter litoralis (strain HTCC2594).